We begin with the raw amino-acid sequence, 148 residues long: Protein H2A.6 (148 aa).

The segment at 120–148 is disordered; the sequence is GAAEKESTKSPKKKAATKSPKKKTAATKE. 2 consecutive short sequence motifs (SPKK motif) follow at residues 129–132 and 138–141; these read SPKK. Positions 129-148 are enriched in basic residues; the sequence is SPKKKAATKSPKKKTAATKE.

The protein belongs to the histone H2A family. In terms of assembly, the nucleosome is a histone octamer containing two molecules each of H2A, H2B, H3 and H4 assembled in one H3-H4 heterotetramer and two H2A-H2B heterodimers. The octamer wraps approximately 147 bp of DNA. In terms of tissue distribution, abundant in meristematic tissues.

It localises to the nucleus. Its subcellular location is the chromosome. Core component of nucleosome. Nucleosomes wrap and compact DNA into chromatin, limiting DNA accessibility to the cellular machineries which require DNA as a template. Histones thereby play a central role in transcription regulation, DNA repair, DNA replication and chromosomal stability. DNA accessibility is regulated via a complex set of post-translational modifications of histones, also called histone code, and nucleosome remodeling. This is Protein H2A.6 (H2A-3) from Triticum aestivum (Wheat).